The following is a 387-amino-acid chain: Galactokinase (387 aa).

33-36 (EHTD) lines the substrate pocket. ATP contacts are provided by residues Ser-67 and 124–130 (GAGLSSS). Residues Ser-130 and Glu-162 each contribute to the Mg(2+) site. Residue Asp-174 is the Proton acceptor of the active site. Tyr-224 contributes to the substrate binding site.

The protein belongs to the GHMP kinase family. GalK subfamily.

The protein resides in the cytoplasm. The enzyme catalyses alpha-D-galactose + ATP = alpha-D-galactose 1-phosphate + ADP + H(+). It participates in carbohydrate metabolism; galactose metabolism. Catalyzes the transfer of the gamma-phosphate of ATP to D-galactose to form alpha-D-galactose-1-phosphate (Gal-1-P). The protein is Galactokinase of Lactiplantibacillus plantarum (strain ATCC BAA-793 / NCIMB 8826 / WCFS1) (Lactobacillus plantarum).